Reading from the N-terminus, the 414-residue chain is MLKRIPVTQLRLGMFVQSLCGSWLDHPFWKRGGFLLDSQADLQRLRESAVKEVWIDASKGLDLPEEAAVSAAAVLPVTMPAGPSPARVALEEEIRHAALLCSRAKAAVVSMFRDARMGQAIDTAHASDLVDEISASVLRHPNALLSLVRLKTSDEYTYMHSVAVCALMIALARQLELPDPLVREAGLAGLLHDIGKMAVPDPILNKPGKLTDPEFGLVRRHPQNGARMLLDCRQVSALVVDVCLHHHERIDGTGYPFGLAQEQISLLARMGAVCDVYDAITSDRPYKKGWNAAEAIRRMAEWNGHFDPQVFRAFVKAVGIYPVGALVRLESGRLGVVLEQHGRSLLTPRVKVFFSARSKVPIPQQVVDLGRAGQTDRIVGFEPAEAWNFRNLDEMWTGLAKSTGSYFDAGTGNP.

In terms of domain architecture, HD-GYP spans 133–330; it reads ISASVLRHPN…YPVGALVRLE (198 aa). Residues histidine 160, histidine 192, aspartate 193, histidine 221, histidine 246, and histidine 247 each coordinate a divalent metal cation.

In terms of assembly, monomer.

The catalysed reaction is 3',3'-c-di-GMP + 2 H2O = 2 GMP + 2 H(+). Activated by Mg(2+) and Mn(2+). Phosphodiesterase (PDE) that catalyzes the hydrolysis of cyclic diguanylate (c-di-GMP) to GMP. Hydrolyzes c-di-GMP to GMP in a two-step reaction, via the linear intermediate 5'-phosphoguanylyl(3'-&gt;5')guanosine (pGpG). In vitro, can use pGpG as an alternative substrate and hydrolyze it into GMP. Acts in regulation of motility, synthesis of virulence determinants and biofilm architecture. This is Cyclic di-GMP phosphodiesterase PA4108 from Pseudomonas aeruginosa (strain ATCC 15692 / DSM 22644 / CIP 104116 / JCM 14847 / LMG 12228 / 1C / PRS 101 / PAO1).